Consider the following 173-residue polypeptide: Shikimate kinase (173 aa).

14–19 contacts ATP; sequence GAGKST. Mg(2+) is bound at residue serine 18. The substrate site is built by aspartate 36, arginine 60, and glycine 82. Residue arginine 120 participates in ATP binding. Arginine 139 is a binding site for substrate. Glutamine 156 contributes to the ATP binding site.

Belongs to the shikimate kinase family. In terms of assembly, monomer. Mg(2+) serves as cofactor.

It localises to the cytoplasm. The enzyme catalyses shikimate + ATP = 3-phosphoshikimate + ADP + H(+). The protein operates within metabolic intermediate biosynthesis; chorismate biosynthesis; chorismate from D-erythrose 4-phosphate and phosphoenolpyruvate: step 5/7. In terms of biological role, catalyzes the specific phosphorylation of the 3-hydroxyl group of shikimic acid using ATP as a cosubstrate. The protein is Shikimate kinase of Actinobacillus pleuropneumoniae serotype 5b (strain L20).